The chain runs to 193 residues: 3-isopropylmalate dehydratase small subunit (193 aa).

Belongs to the LeuD family. LeuD type 1 subfamily. Heterodimer of LeuC and LeuD.

The enzyme catalyses (2R,3S)-3-isopropylmalate = (2S)-2-isopropylmalate. The protein operates within amino-acid biosynthesis; L-leucine biosynthesis; L-leucine from 3-methyl-2-oxobutanoate: step 2/4. Catalyzes the isomerization between 2-isopropylmalate and 3-isopropylmalate, via the formation of 2-isopropylmaleate. The polypeptide is 3-isopropylmalate dehydratase small subunit (Bacillus cereus (strain ZK / E33L)).